We begin with the raw amino-acid sequence, 606 residues long: Envelope glycoprotein gp95 (606 aa).

The signal sequence occupies residues 1–62 (MEAVIKAFLT…VLCEVTGVRA (62 aa)). The Extracellular segment spans residues 63–552 (DVHLLEQPGN…EWAVHLLKGL (490 aa)). Asn79, Asn120, Asn141, Asn158, and Asn178 each carry an N-linked (GlcNAc...) asparagine; by host glycan. Cystine bridges form between Cys87–Cys499, Cys121–Cys152, Cys192–Cys245, Cys258–Cys267, Cys353–Cys370, Cys410–Cys446, and Cys491–Cys498. Positions 185–226 (ISGITGGCVGFRPQGVPWYLGWSRQEATRFLLRHPSFSKSTE) are binding to host receptor. A glycan (N-linked (GlcNAc...) asparagine; by host) is linked at Asn257. Positions 261 to 288 (VGRQYRCGNARSPRPGLPEIQCTRRGGK) are binding to host receptor. 4 N-linked (GlcNAc...) asparagine; by host glycosylation sites follow: Asn291, Asn297, Asn307, and Asn315. Asn391 is a glycosylation site (N-linked (GlcNAc...) asparagine; by host). Residues 418-438 (GPTARIFASILAPGVARAQAL) are fusion peptide. The stretch at 435–485 (AQALREIERLACWSVKQANLTTSFLGDLLDDVTSIRHAVLQNRAAIDFLLL) forms a coiled coil. A glycan (N-linked (GlcNAc...) asparagine; by host) is linked at Asn453. Residues 474–490 (LQNRAAIDFLLLAHGHG) form an immunosuppression region. The N-linked (GlcNAc...) asparagine; by host glycan is linked to Asn501. Residues 503–533 (SDHSESIQKKFQLMKEHVNKIGVDSDPIGSW) adopt a coiled-coil conformation. The chain crosses the membrane as a helical span at residues 553–573 (LLGLVVILLLVVCLPCLLQIV). S-palmitoyl cysteine; by host attachment occurs at residues Cys565 and Cys568. Residues 574 to 606 (CGNIRKMINNSISYHTEYKKLQKACGQPESRIV) are Cytoplasmic-facing.

It belongs to the Alpharetroviruses envelope glycoprotein family. In terms of assembly, heterodimer with the transmembrane protein. The mature envelope protein (Env) consists of a trimer of SU-TM heterodimers attached by a labile interchain disulfide bond. Interacts with the host cell entry receptor TVA isoforms pg900 and pg800; this interaction allows the viral attachment. As to quaternary structure, heterodimer with the surface protein. The mature envelope protein (Env) consists of a trimer of SU-TM heterodimers attached by a labile interchain disulfide bond. Specific enzymatic cleavages in vivo yield mature proteins. Envelope glycoproteins are synthesized as an inactive precursor that is N-glycosylated and processed likely by host cell furin or by a furin-like protease in the Golgi to yield the mature SU and TM proteins. The cleavage site between SU and TM requires the minimal sequence [KR]-X-[KR]-R. In terms of processing, the transmembrane protein is palmitoylated. Palmitoylation is necessary for glycoprotein function and infectivity.

The protein localises to the virion membrane. The protein resides in the host cell membrane. In terms of biological role, the surface protein (SU) attaches the virus to the host cell entry receptor TVA. This interaction triggers the refolding of the transmembrane protein (TM) thereby unmasking its fusion peptide and the formation of a reactive thiolate on Cys-100 to activate its fusogenic potential. Fusion occurs at the host cell plasma membrane. The transmembrane protein (TM) acts as a class I viral fusion protein. Under the current model, the protein has at least 3 conformational states: pre-fusion native state, pre-hairpin intermediate state, and post-fusion hairpin state. During viral and target cell membrane fusion, the coiled coil regions (heptad repeats) assume a trimer-of-hairpins structure, positioning the fusion peptide in close proximity to the C-terminal region of the ectodomain. The formation of this structure appears to drive apposition and subsequent fusion of viral and target cell membranes. Membranes fusion leads to delivery of the nucleocapsid into the cytoplasm. In Avian leukosis virus subgroup A (isolate RSA) (ALV-A RSA), this protein is Envelope glycoprotein gp95 (env).